Consider the following 393-residue polypeptide: Acetylornithine aminotransferase (393 aa).

Pyridoxal 5'-phosphate is bound by residues 102 to 103 and Phe-136; that span reads GA. Residue Arg-139 participates in N(2)-acetyl-L-ornithine binding. 219 to 222 provides a ligand contact to pyridoxal 5'-phosphate; that stretch reads DEVQ. Lys-248 is modified (N6-(pyridoxal phosphate)lysine). Ser-274 is a N(2)-acetyl-L-ornithine binding site. Thr-275 contacts pyridoxal 5'-phosphate.

This sequence belongs to the class-III pyridoxal-phosphate-dependent aminotransferase family. ArgD subfamily. In terms of assembly, homodimer. The cofactor is pyridoxal 5'-phosphate.

The protein localises to the cytoplasm. The enzyme catalyses N(2)-acetyl-L-ornithine + 2-oxoglutarate = N-acetyl-L-glutamate 5-semialdehyde + L-glutamate. The protein operates within amino-acid biosynthesis; L-arginine biosynthesis; N(2)-acetyl-L-ornithine from L-glutamate: step 4/4. The sequence is that of Acetylornithine aminotransferase from Wolinella succinogenes (strain ATCC 29543 / DSM 1740 / CCUG 13145 / JCM 31913 / LMG 7466 / NCTC 11488 / FDC 602W) (Vibrio succinogenes).